The sequence spans 499 residues: UDP-N-acetylmuramoylalanine--D-glutamate ligase (499 aa).

Position 129 to 135 (129 to 135) interacts with ATP; it reads GTNGKTT.

The protein belongs to the MurCDEF family.

It localises to the cytoplasm. It catalyses the reaction UDP-N-acetyl-alpha-D-muramoyl-L-alanine + D-glutamate + ATP = UDP-N-acetyl-alpha-D-muramoyl-L-alanyl-D-glutamate + ADP + phosphate + H(+). It participates in cell wall biogenesis; peptidoglycan biosynthesis. Cell wall formation. Catalyzes the addition of glutamate to the nucleotide precursor UDP-N-acetylmuramoyl-L-alanine (UMA). The polypeptide is UDP-N-acetylmuramoylalanine--D-glutamate ligase (Ralstonia nicotianae (strain ATCC BAA-1114 / GMI1000) (Ralstonia solanacearum)).